Reading from the N-terminus, the 161-residue chain is Putative pre-16S rRNA nuclease (161 aa).

The protein belongs to the YqgF nuclease family.

It is found in the cytoplasm. Could be a nuclease involved in processing of the 5'-end of pre-16S rRNA. This chain is Putative pre-16S rRNA nuclease, found in Bradyrhizobium diazoefficiens (strain JCM 10833 / BCRC 13528 / IAM 13628 / NBRC 14792 / USDA 110).